A 405-amino-acid chain; its full sequence is Imidazolonepropionase (405 aa).

Fe(3+) is bound by residues His72 and His74. 2 residues coordinate Zn(2+): His72 and His74. Positions 81, 144, and 177 each coordinate 4-imidazolone-5-propanoate. Tyr144 is a binding site for N-formimidoyl-L-glutamate. His242 is a Fe(3+) binding site. His242 is a binding site for Zn(2+). Gln245 is a 4-imidazolone-5-propanoate binding site. Residue Asp317 participates in Fe(3+) binding. Asp317 is a binding site for Zn(2+). Asn319 and Gly321 together coordinate N-formimidoyl-L-glutamate. Residue Thr322 participates in 4-imidazolone-5-propanoate binding.

This sequence belongs to the metallo-dependent hydrolases superfamily. HutI family. Requires Zn(2+) as cofactor. The cofactor is Fe(3+).

It localises to the cytoplasm. The catalysed reaction is 4-imidazolone-5-propanoate + H2O = N-formimidoyl-L-glutamate. Its pathway is amino-acid degradation; L-histidine degradation into L-glutamate; N-formimidoyl-L-glutamate from L-histidine: step 3/3. In terms of biological role, catalyzes the hydrolytic cleavage of the carbon-nitrogen bond in imidazolone-5-propanoate to yield N-formimidoyl-L-glutamate. It is the third step in the universal histidine degradation pathway. This Klebsiella pneumoniae subsp. pneumoniae (strain ATCC 700721 / MGH 78578) protein is Imidazolonepropionase.